The sequence spans 265 residues: 6-carboxyhexanoate--CoA ligase (265 aa).

Belongs to the BioW family. In terms of assembly, homodimer. Mg(2+) serves as cofactor.

It carries out the reaction heptanedioate + ATP + CoA = 6-carboxyhexanoyl-CoA + AMP + diphosphate. It functions in the pathway metabolic intermediate metabolism; pimeloyl-CoA biosynthesis; pimeloyl-CoA from pimelate: step 1/1. Catalyzes the transformation of pimelate into pimeloyl-CoA with concomitant hydrolysis of ATP to AMP. The protein is 6-carboxyhexanoate--CoA ligase of Syntrophotalea carbinolica (strain DSM 2380 / NBRC 103641 / GraBd1) (Pelobacter carbinolicus).